Consider the following 481-residue polypeptide: uncharacterized protein (481 aa).

A disordered region spans residues 1–28; it reads MPQSNHYSHQSRSHNDRRRQQPDEKVQA. The 59-residue stretch at 29 to 87 folds into the TRAM domain; that stretch reads TVNIGQRFPLTIRRLGINGEGIGYYKHVITFVKGALPEEVVVAEVTAVHPRYLEAKIRS. Residues glutamine 313, tyrosine 342, aspartate 363, and aspartate 411 each coordinate S-adenosyl-L-methionine. The active-site Nucleophile is the cysteine 438.

It belongs to the class I-like SAM-binding methyltransferase superfamily. RNA M5U methyltransferase family.

This is an uncharacterized protein from Lactiplantibacillus plantarum (strain ATCC BAA-793 / NCIMB 8826 / WCFS1) (Lactobacillus plantarum).